We begin with the raw amino-acid sequence, 273 residues long: Glutamate 5-kinase (273 aa).

Lys-15 contacts ATP. Ser-55, Asp-142, and Asn-158 together coordinate substrate. Residues 178–179 (SD) and 220–226 (TGGMLSK) each bind ATP.

This sequence belongs to the glutamate 5-kinase family.

The protein localises to the cytoplasm. It carries out the reaction L-glutamate + ATP = L-glutamyl 5-phosphate + ADP. It functions in the pathway amino-acid biosynthesis; L-proline biosynthesis; L-glutamate 5-semialdehyde from L-glutamate: step 1/2. Functionally, catalyzes the transfer of a phosphate group to glutamate to form L-glutamate 5-phosphate. The chain is Glutamate 5-kinase from Streptococcus pyogenes serotype M4 (strain MGAS10750).